Reading from the N-terminus, the 147-residue chain is UPF0260 protein CJA_2436 (147 aa).

This sequence belongs to the UPF0260 family.

This chain is UPF0260 protein CJA_2436, found in Cellvibrio japonicus (strain Ueda107) (Pseudomonas fluorescens subsp. cellulosa).